A 328-amino-acid polypeptide reads, in one-letter code: Phosphate acyltransferase (328 aa).

It belongs to the PlsX family. As to quaternary structure, homodimer. Probably interacts with PlsY.

The protein resides in the cytoplasm. It catalyses the reaction a fatty acyl-[ACP] + phosphate = an acyl phosphate + holo-[ACP]. The protein operates within lipid metabolism; phospholipid metabolism. Functionally, catalyzes the reversible formation of acyl-phosphate (acyl-PO(4)) from acyl-[acyl-carrier-protein] (acyl-ACP). This enzyme utilizes acyl-ACP as fatty acyl donor, but not acyl-CoA. This is Phosphate acyltransferase from Campylobacter jejuni subsp. jejuni serotype O:23/36 (strain 81-176).